Consider the following 417-residue polypeptide: MLRKLLIGTALATSFAFSAHAADVKEVQMLHWWTSGGEAAALNVLKGDLAKEGFAWKDVPVAGGGGDAAMTALKAMVAAGNYPTASQMLGYTVLDYAAAGVMGDLTETAKKEGWDKSVPAALQKFSVYEGKWVAAPVNVHSVNWLWINKAVMDKIGGTEPKTFDDFVALLDKAKAAGVIPLALGGQNWQEATMFDSVVLSTGGPEFYKKAFNDLDDASLKSDTMKKSFDNLAKLVTYVDPNFSGRDWNLATAMVIKGDALVQVMGDWAKGEFHAAKKTPGTDFLCYRFPGTDGSVIYNSDMFGMFNVPDDRKAAQVALATATLSKSFQSAFNVVKGSVPARTDVPDTDFDACGKKGIADLKKANEGGTLFGSLAQGYGAPPAVANAYKDVVSKFVHGQIKTSDEAVTELVKAIDDAK.

An N-terminal signal peptide occupies residues 1–21; it reads MLRKLLIGTALATSFAFSAHA.

This sequence belongs to the bacterial solute-binding protein 1 family.

It is found in the periplasm. Functionally, part of a binding-protein-dependent transport system for a sugar. In Mesorhizobium japonicum (strain LMG 29417 / CECT 9101 / MAFF 303099) (Mesorhizobium loti (strain MAFF 303099)), this protein is Probable sugar-binding periplasmic protein.